The sequence spans 119 residues: Beta-2-microglobulin (119 aa).

The first 20 residues, 1–20, serve as a signal peptide directing secretion; it reads MVCSVVVALLALLSLSGLEA. Positions 25–114 constitute an Ig-like C1-type domain; that stretch reads PKIQVYSRHP…VTFSTPKTVK (90 aa). Residues Cys45 and Cys100 are joined by a disulfide bond.

Belongs to the beta-2-microglobulin family. Heterodimer of an alpha chain and a beta chain. Beta-2-microglobulin is the beta-chain of major histocompatibility complex class I molecules.

It localises to the secreted. Component of the class I major histocompatibility complex (MHC). Involved in the presentation of peptide antigens to the immune system. This is Beta-2-microglobulin (B2M) from Cebuella pygmaea (Pygmy marmoset).